The chain runs to 160 residues: 6,7-dimethyl-8-ribityllumazine synthase (160 aa).

Residues tryptophan 27, 59–61 (AIE), and 81–83 (VVI) each bind 5-amino-6-(D-ribitylamino)uracil. 86–87 (ET) is a binding site for (2S)-2-hydroxy-3-oxobutyl phosphate. The active-site Proton donor is the histidine 89. Asparagine 114 lines the 5-amino-6-(D-ribitylamino)uracil pocket. Arginine 128 provides a ligand contact to (2S)-2-hydroxy-3-oxobutyl phosphate.

The protein belongs to the DMRL synthase family. Homopentamer.

The enzyme catalyses (2S)-2-hydroxy-3-oxobutyl phosphate + 5-amino-6-(D-ribitylamino)uracil = 6,7-dimethyl-8-(1-D-ribityl)lumazine + phosphate + 2 H2O + H(+). Its pathway is cofactor biosynthesis; riboflavin biosynthesis; riboflavin from 2-hydroxy-3-oxobutyl phosphate and 5-amino-6-(D-ribitylamino)uracil: step 1/2. Catalyzes the formation of 6,7-dimethyl-8-ribityllumazine by condensation of 5-amino-6-(D-ribitylamino)uracil with 3,4-dihydroxy-2-butanone 4-phosphate. This is the penultimate step in the biosynthesis of riboflavin. The protein is 6,7-dimethyl-8-ribityllumazine synthase of Mycobacterium ulcerans (strain Agy99).